We begin with the raw amino-acid sequence, 333 residues long: Biotin synthase (333 aa).

The 230-residue stretch at 47–276 (FFKNQMEFCS…KSEIRLCGGR (230 aa)) folds into the Radical SAM core domain. [4Fe-4S] cluster-binding residues include C65, C69, and C72. 4 residues coordinate [2Fe-2S] cluster: C109, C141, C201, and R271.

It belongs to the radical SAM superfamily. Biotin synthase family. In terms of assembly, homodimer. [4Fe-4S] cluster is required as a cofactor. The cofactor is [2Fe-2S] cluster.

The enzyme catalyses (4R,5S)-dethiobiotin + (sulfur carrier)-SH + 2 reduced [2Fe-2S]-[ferredoxin] + 2 S-adenosyl-L-methionine = (sulfur carrier)-H + biotin + 2 5'-deoxyadenosine + 2 L-methionine + 2 oxidized [2Fe-2S]-[ferredoxin]. The protein operates within cofactor biosynthesis; biotin biosynthesis; biotin from 7,8-diaminononanoate: step 2/2. Catalyzes the conversion of dethiobiotin (DTB) to biotin by the insertion of a sulfur atom into dethiobiotin via a radical-based mechanism. This Sulfurihydrogenibium sp. (strain YO3AOP1) protein is Biotin synthase.